We begin with the raw amino-acid sequence, 159 residues long: Transcription elongation factor A protein-like 1 (159 aa).

A disordered region spans residues 1 to 99 (MDKPRKENEE…CGVGKHKLEE (99 aa)). The span at 17–34 (KTDEERPPVEHSPEKQSL) shows a compositional bias: basic and acidic residues. The span at 37-54 (QSSEEQSSEEEFFPEELL) shows a compositional bias: acidic residues. Basic and acidic residues predominate over residues 64-80 (SEERPPQEGLSRKDLFE).

This sequence belongs to the TFS-II family. TFA subfamily.

The protein localises to the nucleus. May be involved in transcriptional regulation. Modulates various viral and cellular promoters in a promoter context-dependent manner. Does not bind DNA directly. The chain is Transcription elongation factor A protein-like 1 from Ateles geoffroyi (Black-handed spider monkey).